We begin with the raw amino-acid sequence, 29 residues long: Cytochrome b6-f complex subunit 8 (29 aa).

A helical transmembrane segment spans residues 3 to 23; the sequence is IVSFAWAALMVVFTFSLSLVV.

This sequence belongs to the PetN family. In terms of assembly, the 4 large subunits of the cytochrome b6-f complex are cytochrome b6, subunit IV (17 kDa polypeptide, PetD), cytochrome f and the Rieske protein, while the 4 small subunits are PetG, PetL, PetM and PetN. The complex functions as a dimer.

The protein resides in the plastid. Its subcellular location is the chloroplast thylakoid membrane. In terms of biological role, component of the cytochrome b6-f complex, which mediates electron transfer between photosystem II (PSII) and photosystem I (PSI), cyclic electron flow around PSI, and state transitions. The chain is Cytochrome b6-f complex subunit 8 from Phalaenopsis aphrodite subsp. formosana (Moth orchid).